The following is a 396-amino-acid chain: Na(+)/H(+) antiporter NhaA 2 (396 aa).

Transmembrane regions (helical) follow at residues Leu17–Phe37, Leu62–Ile82, Ser98–Leu118, Gly125–Gly145, Leu154–Phe174, Leu179–Tyr199, Ile209–Ala229, Phe268–Phe288, Leu296–Phe316, Ile337–Leu357, and Val368–Ile388.

It belongs to the NhaA Na(+)/H(+) (TC 2.A.33) antiporter family.

It is found in the cell inner membrane. The enzyme catalyses Na(+)(in) + 2 H(+)(out) = Na(+)(out) + 2 H(+)(in). Functionally, na(+)/H(+) antiporter that extrudes sodium in exchange for external protons. This chain is Na(+)/H(+) antiporter NhaA 2, found in Aliarcobacter butzleri (strain RM4018) (Arcobacter butzleri).